A 259-amino-acid polypeptide reads, in one-letter code: Type III pantothenate kinase (259 aa).

6 to 13 (DVGNTNIV) lines the ATP pocket. Residues Y100 and 107 to 110 (GADR) each bind substrate. Residue D109 is the Proton acceptor of the active site. D129 provides a ligand contact to K(+). Residue T132 participates in ATP binding. T184 contacts substrate.

It belongs to the type III pantothenate kinase family. Homodimer. It depends on NH4(+) as a cofactor. Requires K(+) as cofactor.

It is found in the cytoplasm. The enzyme catalyses (R)-pantothenate + ATP = (R)-4'-phosphopantothenate + ADP + H(+). Its pathway is cofactor biosynthesis; coenzyme A biosynthesis; CoA from (R)-pantothenate: step 1/5. In terms of biological role, catalyzes the phosphorylation of pantothenate (Pan), the first step in CoA biosynthesis. The polypeptide is Type III pantothenate kinase (Clostridium perfringens (strain ATCC 13124 / DSM 756 / JCM 1290 / NCIMB 6125 / NCTC 8237 / Type A)).